Consider the following 343-residue polypeptide: Transmembrane protein 120A (343 aa).

At 1–132 the chain is on the cytoplasmic side; sequence MHPPPPGPLG…KQAKFAYKDE (132 aa). Residue K130 participates in CoA binding. Residues 133–152 traverse the membrane as a helical segment; the sequence is YEKFKLYLTIILILISFTCR. Topologically, residues 153-158 are extracellular; the sequence is FLLNSR. The chain crosses the membrane as a helical span at residues 159–177; that stretch reads VTDAAFNFLLVWYYCTLTI. Topologically, residues 178 to 190 are cytoplasmic; that stretch reads RESILINNGSRIK. Residues S187 and R188 each coordinate CoA. Residues 191-209 traverse the membrane as a helical segment; that stretch reads GWWVFHHYVSTFLSGVMLT. The Extracellular segment spans residues 210–218; sequence WPDGLMYQK. The chain crosses the membrane as a helical span at residues 219–240; sequence FRNQFLSFSMYQSFVQFLQYYY. Positions 237, 240, 241, and 283 each coordinate CoA. The Cytoplasmic portion of the chain corresponds to 241 to 270; the sequence is QSGCLYRLRALGERHTMDLTVEGFQSWMWR. The helical transmembrane segment at 271–294 threads the bilayer; sequence GLTFLLPFLFFGHFWQLFNALTLF. At 295–304 the chain is on the extracellular side; it reads NLARDPECKE. Residues 305-330 form a helical membrane-spanning segment; it reads WQVLMCGFPFLLLFLGNFFTTLRVVH. Over 331–343 the chain is Cytoplasmic; it reads QKFHNQLHGSKKE. K332 serves as a coordination point for CoA.

The protein belongs to the TMEM120 family. As to quaternary structure, homodimer. Forms heterooligomer with TMEM120B. Interacts with PKD2; TMEM120A inhibits PKD2 channel activity through the physical association of PKD2 with TMEM120A.

It is found in the cell membrane. The protein resides in the nucleus inner membrane. Its subcellular location is the endoplasmic reticulum. Multifunctional protein involved in mechanosensation, and plays an essential role in lipid metabolism and adipocyte differentiation. May function as an ion channel involved in sensing mechanical stimuli. Mediates the mechanosensitivity of the PKD2-TMEM120A channel complex through direct physical interaction. TMEM120A seems to affect mechanosensation by inhibiting PIEZO2 channels, possibly by altering cellular lipid content. TMEM120A is structurally similar to a lipid-modifying enzyme, ELOVL7, and contains a bound coenzyme A molecule, which suggests it might function as an enzyme in lipid metabolism. Additionnaly, implicated in innate immune response against Zika virus. Acts as a key activator of the antiviral signaling involving STING1. The polypeptide is Transmembrane protein 120A (Bos taurus (Bovine)).